A 141-amino-acid polypeptide reads, in one-letter code: Ribonuclease P protein component (141 aa).

2 disordered regions span residues 37-56 and 114-141; these read RTEE…VGFT and RRIT…VNGK. Residues 114-123 show a composition bias toward basic and acidic residues; that stretch reads RRITAKGERR.

The protein belongs to the RnpA family. As to quaternary structure, consists of a catalytic RNA component (M1 or rnpB) and a protein subunit.

It carries out the reaction Endonucleolytic cleavage of RNA, removing 5'-extranucleotides from tRNA precursor.. RNaseP catalyzes the removal of the 5'-leader sequence from pre-tRNA to produce the mature 5'-terminus. It can also cleave other RNA substrates such as 4.5S RNA. The protein component plays an auxiliary but essential role in vivo by binding to the 5'-leader sequence and broadening the substrate specificity of the ribozyme. In Brucella suis biovar 1 (strain 1330), this protein is Ribonuclease P protein component.